Reading from the N-terminus, the 75-residue chain is Veswaprin-c (75 aa).

Positions 1–24 are cleaved as a signal peptide; it reads MSSGGLLLLLGLLTLWAELTPVSS. A WAP domain is found at 27 to 72; it reads RPKKPGLCPPRPQKPPCVRECKNDWRCPGERKCCRYGCIYECRDPI. Cystine bridges form between Cys-34/Cys-60, Cys-43/Cys-64, Cys-47/Cys-59, and Cys-53/Cys-68.

It belongs to the venom waprin family. In terms of tissue distribution, expressed by the venom gland.

Its subcellular location is the secreted. Functionally, damages membranes of susceptible bacteria. Has no hemolytic activity. Not toxic to mice. Does not inhibit the proteinases elastase and cathepsin G. The sequence is that of Veswaprin-c from Demansia vestigiata (Lesser black whip snake).